Here is a 488-residue protein sequence, read N- to C-terminus: DELTA-alicitoxin-Pse2b (488 aa).

A signal peptide spans 1–21 (MSKPIIFLLTAFVVLTDLGAT). The 321-residue stretch at 24–344 (TEKVEVKAKP…GYLNFDCAYE (321 aa)) folds into the MACPF domain. An EGF-like domain is found at 369–398 (VCKLGPEGCHSDDDCESDDLIYCACCGDSC). 3 cysteine pairs are disulfide-bonded: C370/C383, C377/C391, and C393/C398.

It is found in the secreted. Its subcellular location is the nematocyst. Its function is as follows. Causes lethal toxicity to the shrimp Palaemon paucidence, and hemolytic activity toward sheep red blood cells. This is DELTA-alicitoxin-Pse2b from Phyllodiscus semoni (Night anemone).